The primary structure comprises 280 residues: Bifunctional protein FolD (280 aa).

Residues 164–166, Ser189, and Val230 each bind NADP(+); that span reads GRS.

The protein belongs to the tetrahydrofolate dehydrogenase/cyclohydrolase family. As to quaternary structure, homodimer.

The enzyme catalyses (6R)-5,10-methylene-5,6,7,8-tetrahydrofolate + NADP(+) = (6R)-5,10-methenyltetrahydrofolate + NADPH. It catalyses the reaction (6R)-5,10-methenyltetrahydrofolate + H2O = (6R)-10-formyltetrahydrofolate + H(+). Its pathway is one-carbon metabolism; tetrahydrofolate interconversion. Catalyzes the oxidation of 5,10-methylenetetrahydrofolate to 5,10-methenyltetrahydrofolate and then the hydrolysis of 5,10-methenyltetrahydrofolate to 10-formyltetrahydrofolate. The polypeptide is Bifunctional protein FolD (Geotalea uraniireducens (strain Rf4) (Geobacter uraniireducens)).